A 154-amino-acid polypeptide reads, in one-letter code: Terephthalate 1,2-dioxygenase, terminal oxygenase component subunit beta 2 (154 aa).

This sequence belongs to the bacterial ring-hydroxylating dioxygenase beta subunit family. As to quaternary structure, heterotetramer composed of 2 alpha (TphA2I and TphA2II) and 2 beta (TphA3I and TphA3II) subunits. Part of a multicomponent enzyme system composed of a reductase (TphA1I or TphA1II) and a two-subunit oxygenase component (TphA2I or TphA2II and TphA3I or TphA3II). It depends on Fe cation as a cofactor.

It catalyses the reaction terephthalate + NADH + O2 + H(+) = (3S,4R)-3,4-dihydroxycyclohexa-1,5-diene-1,4-dicarboxylate + NAD(+). Its activity is regulated as follows. Inhibited by EDTA. Its function is as follows. Component of the terephthalate 1,2-dioxygenase multicomponent enzyme system which catalyzes the dioxygenation of terephthalate (TER/TPA) to 1,2-dihydroxy-3,5-cyclohexadiene-1,4-dicarboxylic acid (DCD). It can also use 2,5-dicarboxypyridine (PDC) and 1,4-napthalenedicarboxylic acid (NDC) as substrates, and preferentially uses NADPH which is the physiological electron donor. The sequence is that of Terephthalate 1,2-dioxygenase, terminal oxygenase component subunit beta 2 (tphA3II) from Comamonas sp.